A 60-amino-acid chain; its full sequence is Large ribosomal subunit protein uL30 (60 aa).

It belongs to the universal ribosomal protein uL30 family. As to quaternary structure, part of the 50S ribosomal subunit.

The sequence is that of Large ribosomal subunit protein uL30 from Desulfotalea psychrophila (strain LSv54 / DSM 12343).